Reading from the N-terminus, the 48-residue chain is ATP synthase protein 8 (48 aa).

A helical transmembrane segment spans residues 13-33 (LTYGFLLLIILLVLFSQFLLP).

The protein belongs to the ATPase protein 8 family. As to quaternary structure, F-type ATPases have 2 components, CF(1) - the catalytic core - and CF(0) - the membrane proton channel.

The protein localises to the mitochondrion membrane. Its function is as follows. Mitochondrial membrane ATP synthase (F(1)F(0) ATP synthase or Complex V) produces ATP from ADP in the presence of a proton gradient across the membrane which is generated by electron transport complexes of the respiratory chain. F-type ATPases consist of two structural domains, F(1) - containing the extramembraneous catalytic core and F(0) - containing the membrane proton channel, linked together by a central stalk and a peripheral stalk. During catalysis, ATP synthesis in the catalytic domain of F(1) is coupled via a rotary mechanism of the central stalk subunits to proton translocation. Part of the complex F(0) domain. Minor subunit located with subunit a in the membrane. This Wickerhamomyces canadensis (Yeast) protein is ATP synthase protein 8 (ATP8).